Here is a 128-residue protein sequence, read N- to C-terminus: Calcitonin gene-related peptide 1 (128 aa).

An N-terminal signal peptide occupies residues 1–25; that stretch reads MGFQKFSPFLALSILVLLQAGSLHA. Residues 26–80 constitute a propeptide that is removed on maturation; it reads APFRSALESSPADPATLSEDEARLLLAALVQDYVQMKASELEQEQEREGSRIIAQ. Cysteines 84 and 89 form a disulfide. The residue at position 119 (phenylalanine 119) is a Phenylalanine amide. Positions 125-128 are excised as a propeptide; it reads DLQA.

Belongs to the calcitonin family. As to expression, expressed in spinal cord.

The protein resides in the secreted. In terms of biological role, CGRP1/CALCA is a peptide hormone that induces vasodilation mediated by the CALCRL-RAMP1 receptor complex. Dilates a variety of vessels including the coronary, cerebral and systemic vasculature. Its abundance in the CNS also points toward a neurotransmitter or neuromodulator role. It also elevates platelet cAMP. CGRP1 can also bind and activate CALCR-RAMP1 (AMYR1) receptor complex. This Homo sapiens (Human) protein is Calcitonin gene-related peptide 1.